A 252-amino-acid polypeptide reads, in one-letter code: 2,5-diamino-6-ribosylamino-4(3H)-pyrimidinone 5'-phosphate reductase (252 aa).

Residues Thr80, Asp84, Val166, and 189–193 contribute to the NADP(+) site; that span reads GGIVI.

This sequence belongs to the HTP reductase family. In terms of assembly, homodimer.

It catalyses the reaction 2,5-diamino-6-(1-D-ribitylamino)pyrimidin-4(3H)-one 5'-phosphate + NADP(+) = 2,5-diamino-6-(1-D-ribosylamino)pyrimidin-4(3H)-one 5'-phosphate + NADPH + H(+). The catalysed reaction is 2,5-diamino-6-(1-D-ribitylamino)pyrimidin-4(3H)-one 5'-phosphate + NAD(+) = 2,5-diamino-6-(1-D-ribosylamino)pyrimidin-4(3H)-one 5'-phosphate + NADH + H(+). The protein operates within cofactor biosynthesis; riboflavin biosynthesis. Catalyzes an early step in riboflavin biosynthesis, the NADPH-dependent reduction of the ribose side chain of 2,5-diamino-6-ribosylamino-4(3H)-pyrimidinone 5'-phosphate, yielding 2,5-diamino-6-ribitylamino-4(3H)-pyrimidinone 5'-phosphate. The protein is 2,5-diamino-6-ribosylamino-4(3H)-pyrimidinone 5'-phosphate reductase (RIB7) of Kluyveromyces lactis (strain ATCC 8585 / CBS 2359 / DSM 70799 / NBRC 1267 / NRRL Y-1140 / WM37) (Yeast).